The primary structure comprises 288 residues: Signal recognition particle receptor FtsY (288 aa).

GTP contacts are provided by residues 93 to 100 (GINGTGKT), 175 to 179 (DTAGR), and 233 to 236 (TKLD).

This sequence belongs to the GTP-binding SRP family. FtsY subfamily. As to quaternary structure, part of the signal recognition particle protein translocation system, which is composed of SRP and FtsY.

The protein resides in the cell membrane. It localises to the cytoplasm. It catalyses the reaction GTP + H2O = GDP + phosphate + H(+). Its function is as follows. Involved in targeting and insertion of nascent membrane proteins into the cytoplasmic membrane. Acts as a receptor for the complex formed by the signal recognition particle (SRP) and the ribosome-nascent chain (RNC). This chain is Signal recognition particle receptor FtsY, found in Thermoplasma acidophilum (strain ATCC 25905 / DSM 1728 / JCM 9062 / NBRC 15155 / AMRC-C165).